The following is a 261-amino-acid chain: MTHQTHAYHMVDPSPWPLTGALSALLMTSGLTMWFHYHSVVLLFLGLMTNTLTMFQWWRDVVREGTFQGHHTPVVQEGLRYGMILFITSEVLFFTGFFWAFYHSSLAPTPELGSYWPPVGVYPLNPLEVPLLNTSVLLASGVTITWAHHSLMEGNRKNMLQALLITILLGVYFTLLQMFEYYEASFTISDGIYGSTFFVTTGFHGLHVIIGSTFLLTCFIRQLKFHFTSNHHFGFEAAAWYWHFVDVVWLFLYLSIYWWGS.

Topologically, residues 1 to 15 (MTHQTHAYHMVDPSP) are mitochondrial matrix. A helical transmembrane segment spans residues 16 to 34 (WPLTGALSALLMTSGLTMW). The Mitochondrial intermembrane segment spans residues 35-40 (FHYHSV). Residues 41-66 (VLLFLGLMTNTLTMFQWWRDVVREGT) traverse the membrane as a helical segment. The Mitochondrial matrix segment spans residues 67–72 (FQGHHT). Residues 73–105 (PVVQEGLRYGMILFITSEVLFFTGFFWAFYHSS) traverse the membrane as a helical segment. Residues 106–128 (LAPTPELGSYWPPVGVYPLNPLE) are Mitochondrial intermembrane-facing. A helical membrane pass occupies residues 129–152 (VPLLNTSVLLASGVTITWAHHSLM). Residues 153–155 (EGN) lie on the Mitochondrial matrix side of the membrane. The helical transmembrane segment at 156-183 (RKNMLQALLITILLGVYFTLLQMFEYYE) threads the bilayer. The Mitochondrial intermembrane portion of the chain corresponds to 184–190 (ASFTISD). Residues 191 to 223 (GIYGSTFFVTTGFHGLHVIIGSTFLLTCFIRQL) traverse the membrane as a helical segment. Topologically, residues 224–232 (KFHFTSNHH) are mitochondrial matrix. A helical membrane pass occupies residues 233–256 (FGFEAAAWYWHFVDVVWLFLYLSI). At 257–261 (YWWGS) the chain is on the mitochondrial intermembrane side.

The protein belongs to the cytochrome c oxidase subunit 3 family. In terms of assembly, component of the cytochrome c oxidase (complex IV, CIV), a multisubunit enzyme composed of 14 subunits. The complex is composed of a catalytic core of 3 subunits MT-CO1, MT-CO2 and MT-CO3, encoded in the mitochondrial DNA, and 11 supernumerary subunits COX4I, COX5A, COX5B, COX6A, COX6B, COX6C, COX7A, COX7B, COX7C, COX8 and NDUFA4, which are encoded in the nuclear genome. The complex exists as a monomer or a dimer and forms supercomplexes (SCs) in the inner mitochondrial membrane with NADH-ubiquinone oxidoreductase (complex I, CI) and ubiquinol-cytochrome c oxidoreductase (cytochrome b-c1 complex, complex III, CIII), resulting in different assemblies (supercomplex SCI(1)III(2)IV(1) and megacomplex MCI(2)III(2)IV(2)).

Its subcellular location is the mitochondrion inner membrane. The enzyme catalyses 4 Fe(II)-[cytochrome c] + O2 + 8 H(+)(in) = 4 Fe(III)-[cytochrome c] + 2 H2O + 4 H(+)(out). In terms of biological role, component of the cytochrome c oxidase, the last enzyme in the mitochondrial electron transport chain which drives oxidative phosphorylation. The respiratory chain contains 3 multisubunit complexes succinate dehydrogenase (complex II, CII), ubiquinol-cytochrome c oxidoreductase (cytochrome b-c1 complex, complex III, CIII) and cytochrome c oxidase (complex IV, CIV), that cooperate to transfer electrons derived from NADH and succinate to molecular oxygen, creating an electrochemical gradient over the inner membrane that drives transmembrane transport and the ATP synthase. Cytochrome c oxidase is the component of the respiratory chain that catalyzes the reduction of oxygen to water. Electrons originating from reduced cytochrome c in the intermembrane space (IMS) are transferred via the dinuclear copper A center (CU(A)) of subunit 2 and heme A of subunit 1 to the active site in subunit 1, a binuclear center (BNC) formed by heme A3 and copper B (CU(B)). The BNC reduces molecular oxygen to 2 water molecules using 4 electrons from cytochrome c in the IMS and 4 protons from the mitochondrial matrix. The protein is Cytochrome c oxidase subunit 3 (MT-CO3) of Mammuthus primigenius (Siberian woolly mammoth).